The chain runs to 188 residues: ATP synthase subunit b 2 (188 aa).

Residues F41–P61 traverse the membrane as a helical segment.

Belongs to the ATPase B chain family. As to quaternary structure, F-type ATPases have 2 components, F(1) - the catalytic core - and F(0) - the membrane proton channel. F(1) has five subunits: alpha(3), beta(3), gamma(1), delta(1), epsilon(1). F(0) has three main subunits: a(1), b(2) and c(10-14). The alpha and beta chains form an alternating ring which encloses part of the gamma chain. F(1) is attached to F(0) by a central stalk formed by the gamma and epsilon chains, while a peripheral stalk is formed by the delta and b chains.

It is found in the cell inner membrane. F(1)F(0) ATP synthase produces ATP from ADP in the presence of a proton or sodium gradient. F-type ATPases consist of two structural domains, F(1) containing the extramembraneous catalytic core and F(0) containing the membrane proton channel, linked together by a central stalk and a peripheral stalk. During catalysis, ATP synthesis in the catalytic domain of F(1) is coupled via a rotary mechanism of the central stalk subunits to proton translocation. Functionally, component of the F(0) channel, it forms part of the peripheral stalk, linking F(1) to F(0). The b'-subunit is a diverged and duplicated form of b found in plants and photosynthetic bacteria. This is ATP synthase subunit b 2 (atpF2) from Bartonella bacilliformis (strain ATCC 35685 / KC583 / Herrer 020/F12,63).